Reading from the N-terminus, the 280-residue chain is Shikimate dehydrogenase (NADP(+)) (280 aa).

Residues 15–17 (SLS) and Thr-62 each bind shikimate. Catalysis depends on Lys-66, which acts as the Proton acceptor. Residues Asn-88 and Asp-104 each contribute to the shikimate site. NADP(+) is bound by residues 128-132 (GAGGA), 151-156 (NRTEER), and Ile-222. Tyr-224 serves as a coordination point for shikimate. Residue Gly-245 coordinates NADP(+).

Belongs to the shikimate dehydrogenase family. Homodimer.

It carries out the reaction shikimate + NADP(+) = 3-dehydroshikimate + NADPH + H(+). The protein operates within metabolic intermediate biosynthesis; chorismate biosynthesis; chorismate from D-erythrose 4-phosphate and phosphoenolpyruvate: step 4/7. Functionally, involved in the biosynthesis of the chorismate, which leads to the biosynthesis of aromatic amino acids. Catalyzes the reversible NADPH linked reduction of 3-dehydroshikimate (DHSA) to yield shikimate (SA). The chain is Shikimate dehydrogenase (NADP(+)) from Methanosarcina acetivorans (strain ATCC 35395 / DSM 2834 / JCM 12185 / C2A).